The chain runs to 93 residues: MSETQNTQVTKRQRTLVGKVVSNKMDKTVVVLVERRVKHPIYGKIVMRSAKYKAHDESNQYNEGDTVEIAEGRPISRSKAWRVVRLVEAARII.

It belongs to the universal ribosomal protein uS17 family. As to quaternary structure, part of the 30S ribosomal subunit.

Its function is as follows. One of the primary rRNA binding proteins, it binds specifically to the 5'-end of 16S ribosomal RNA. The sequence is that of Small ribosomal subunit protein uS17 from Bordetella avium (strain 197N).